Here is a 1621-residue protein sequence, read N- to C-terminus: Nestin (1621 aa).

Residue Met-1 is modified to N-acetylmethionine. The segment at 1–7 (MEGCMGE) is head. The segment at 8-43 (ESFQMWELNRRLEAYLARVKALEEQNELLSAELGGL) is coil 1A. Positions 8–313 (ESFQMWELNR…TLLEAENSRL (306 aa)) constitute an IF rod domain. A linker 1 region spans residues 44-55 (RAQSADTSWRAH). A coil 1B region spans residues 56–151 (ADDELAALRA…VAHEEERVGL (96 aa)). The tract at residues 152–173 (NAQAACAPRCPAPPRGPPAPAP) is linker 12. The interval 174 to 192 (EVEELARRLGEAWRGAVRG) is coil 2A. Residues 193–195 (YQE) are linker 2. Positions 196 to 313 (RVAHMETSLG…TLLEAENSRL (118 aa)) are coil 2B. The residue at position 311 (Ser-311) is a Phosphoserine. Residues 314–1621 (QTPGGGSKTS…DRESWSSGED (1308 aa)) are tail. Thr-315 carries the post-translational modification Phosphothreonine. A Phosphoserine modification is found at Ser-325. Thr-338 carries the phosphothreonine modification. 2 positions are modified to phosphoserine: Ser-355 and Ser-358. Thr-388 is modified (phosphothreonine). Phosphoserine is present on residues Ser-398, Ser-471, Ser-476, Ser-548, Ser-564, Ser-578, Ser-588, Ser-638, Ser-680, Ser-702, Ser-746, and Ser-768. Positions 439–490 (SVLPGPEEPGGQRQEASTGQSPEDHASLAPPLSPDHSSLEAKDGESGGSRVF) are disordered. A disordered region spans residues 670–788 (LEKENQEPLR…PPEKVDLEPL (119 aa)). 3 stretches are compositionally biased toward basic and acidic residues: residues 687–725 (EALRPLTKENQEPLRSLEDENKEAFRSLEKENQEPLKTL), 736–770 (LETENHKSLRSLEEQDQETLRTLEKETQQRRRSLG), and 779–788 (PPEKVDLEPL). Ser-790 is subject to Phosphoserine. Lys-811 is covalently cross-linked (Glycyl lysine isopeptide (Lys-Gly) (interchain with G-Cter in SUMO1); alternate). Residue Lys-811 forms a Glycyl lysine isopeptide (Lys-Gly) (interchain with G-Cter in SUMO2); alternate linkage. Residues Ser-820, Ser-831, and Ser-842 each carry the phosphoserine modification. Residue Thr-851 is modified to Phosphothreonine. Phosphoserine is present on residues Ser-894, Ser-905, Ser-913, and Ser-934. The segment at 895-1593 (LGAWNLENLR…GSALKTSWAG (699 aa)) is disordered. Basic and acidic residues-rich tracts occupy residues 904-936 (RSPEEVDKESQRNLEEEENLGKGEYQESLRSLE), 949-960 (QRWEDTVEKDQE), 980-994 (LNLREQDGFTGKEEV), and 1012-1024 (GHPESPEPKEQRG). Ser-1016 is subject to Phosphoserine. Over residues 1085–1098 (GSEPAMGESAAGAE) the composition is skewed to low complexity. Gly residues predominate over residues 1099–1110 (PGPGQGVGGLGD). Basic and acidic residues-rich tracts occupy residues 1129 to 1145 (LEAKRVQGLEGPRKDLE) and 1159 to 1184 (GKSRDPWEPPREGREESEAEAPRGAE). Ser-1261, Ser-1282, Ser-1286, Ser-1310, Ser-1347, Ser-1409, Ser-1418, and Ser-1452 each carry phosphoserine. Residues 1275-1292 (PQEEGEESREESEEDELG) show a composition bias toward acidic residues. The span at 1409–1428 (SDGFADEEESGEEGEEDQEE) shows a compositional bias: acidic residues. Low complexity-rich tracts occupy residues 1440-1453 (GSSVGSLQALSSSQ) and 1460-1470 (SDSVSVSVPWD). The span at 1486–1495 (ETESQDSAEP) shows a compositional bias: polar residues. Phosphoserine occurs at positions 1496, 1498, 1577, 1617, and 1618.

Belongs to the intermediate filament family. As to quaternary structure, forms homodimers and homotetramers in vitro. In mixtures with other intermediate filament proteins such as vimentin and alpha-internexin, tis protein preferentially forms heterodimers which can assemble to form intermediate filaments if nestin does not exceed 25%. Interacts with FHOD3. In terms of processing, constitutively phosphorylated. This increases during mitosis when the cytoplasmic intermediate filament network is reorganized. CNS stem cells.

Required for brain and eye development. Promotes the disassembly of phosphorylated vimentin intermediate filaments (IF) during mitosis and may play a role in the trafficking and distribution of IF proteins and other cellular factors to daughter cells during progenitor cell division. Required for survival, renewal and mitogen-stimulated proliferation of neural progenitor cells. In Homo sapiens (Human), this protein is Nestin (NES).